We begin with the raw amino-acid sequence, 104 residues long: Large ribosomal subunit protein uL24 (104 aa).

Belongs to the universal ribosomal protein uL24 family. Part of the 50S ribosomal subunit.

Functionally, one of two assembly initiator proteins, it binds directly to the 5'-end of the 23S rRNA, where it nucleates assembly of the 50S subunit. Its function is as follows. One of the proteins that surrounds the polypeptide exit tunnel on the outside of the subunit. This chain is Large ribosomal subunit protein uL24, found in Baumannia cicadellinicola subsp. Homalodisca coagulata.